Reading from the N-terminus, the 566-residue chain is Alpha-amylase (566 aa).

A signal peptide spans 1–28 (MARRLATASLAVLAAAATALTAPTPAAA). Positions 120, 166, and 175 each coordinate Ca(2+). Asp-205 acts as the Nucleophile in catalysis. Residue His-209 participates in Ca(2+) binding. The Proton donor role is filled by Glu-232. One can recognise a CBM20 domain in the interval 465 to 566 (GPGTGQTSAS…ALTLNDTWRG (102 aa)).

This sequence belongs to the glycosyl hydrolase 13 family. As to quaternary structure, monomer. It depends on Ca(2+) as a cofactor.

The catalysed reaction is Endohydrolysis of (1-&gt;4)-alpha-D-glucosidic linkages in polysaccharides containing three or more (1-&gt;4)-alpha-linked D-glucose units.. In Streptomyces griseus, this protein is Alpha-amylase (amy).